We begin with the raw amino-acid sequence, 100 residues long: UPF0045 protein MJ1052 (100 aa).

It belongs to the UPF0045 family.

The sequence is that of UPF0045 protein MJ1052 from Methanocaldococcus jannaschii (strain ATCC 43067 / DSM 2661 / JAL-1 / JCM 10045 / NBRC 100440) (Methanococcus jannaschii).